Reading from the N-terminus, the 714-residue chain is Fatty acid oxidation complex subunit alpha (714 aa).

The interval 1–190 is enoyl-CoA hydratase; the sequence is MEMASVFTLN…KLGLVDDVVP (190 aa). The segment at 306–714 is 3-hydroxyacyl-CoA dehydrogenase; that stretch reads APLNSVGILG…FWKTTATDLQ (409 aa).

The protein in the N-terminal section; belongs to the enoyl-CoA hydratase/isomerase family. In the central section; belongs to the 3-hydroxyacyl-CoA dehydrogenase family. In terms of assembly, heterotetramer of two alpha chains (FadJ) and two beta chains (FadI).

Its subcellular location is the cytoplasm. The enzyme catalyses a (3S)-3-hydroxyacyl-CoA = a (2E)-enoyl-CoA + H2O. The catalysed reaction is a 4-saturated-(3S)-3-hydroxyacyl-CoA = a (3E)-enoyl-CoA + H2O. It carries out the reaction a (3S)-3-hydroxyacyl-CoA + NAD(+) = a 3-oxoacyl-CoA + NADH + H(+). It catalyses the reaction (3S)-3-hydroxybutanoyl-CoA = (3R)-3-hydroxybutanoyl-CoA. Its pathway is lipid metabolism; fatty acid beta-oxidation. Catalyzes the formation of a hydroxyacyl-CoA by addition of water on enoyl-CoA. Also exhibits 3-hydroxyacyl-CoA epimerase and 3-hydroxyacyl-CoA dehydrogenase activities. This is Fatty acid oxidation complex subunit alpha from Escherichia coli (strain SE11).